We begin with the raw amino-acid sequence, 400 residues long: Formate-dependent phosphoribosylglycinamide formyltransferase (400 aa).

Residues 22-23 (EL) and glutamate 82 contribute to the N(1)-(5-phospho-beta-D-ribosyl)glycinamide site. ATP is bound by residues arginine 115, lysine 157, 162-167 (SSGKGQ), 197-200 (EGFV), and glutamate 205. Residues 120-315 (RLAAETLGLP…EFELHARAIL (196 aa)) enclose the ATP-grasp domain. Residues glutamate 274 and glutamate 286 each contribute to the Mg(2+) site. Residues aspartate 293, lysine 362, and 369–370 (RR) contribute to the N(1)-(5-phospho-beta-D-ribosyl)glycinamide site.

It belongs to the PurK/PurT family. In terms of assembly, homodimer.

The catalysed reaction is N(1)-(5-phospho-beta-D-ribosyl)glycinamide + formate + ATP = N(2)-formyl-N(1)-(5-phospho-beta-D-ribosyl)glycinamide + ADP + phosphate + H(+). Its pathway is purine metabolism; IMP biosynthesis via de novo pathway; N(2)-formyl-N(1)-(5-phospho-D-ribosyl)glycinamide from N(1)-(5-phospho-D-ribosyl)glycinamide (formate route): step 1/1. In terms of biological role, involved in the de novo purine biosynthesis. Catalyzes the transfer of formate to 5-phospho-ribosyl-glycinamide (GAR), producing 5-phospho-ribosyl-N-formylglycinamide (FGAR). Formate is provided by PurU via hydrolysis of 10-formyl-tetrahydrofolate. This chain is Formate-dependent phosphoribosylglycinamide formyltransferase, found in Mycolicibacterium gilvum (strain PYR-GCK) (Mycobacterium gilvum (strain PYR-GCK)).